Consider the following 369-residue polypeptide: 3,7-dimethylxanthine N-methyltransferase TCS1 (369 aa).

Y24 is a binding site for S-adenosyl-L-homocysteine. T31 is a caffeine binding site. The S-adenosyl-L-homocysteine site is built by C66, N71, D103, L104, S138, and F139. Residues Y156, H159, and W160 each coordinate caffeine. N177 lines the Mg(2+) pocket. R225 contacts caffeine. The Mg(2+) site is built by D263, F265, and N266. F321 is a caffeine binding site.

This sequence belongs to the methyltransferase superfamily. Type-7 methyltransferase family. The cofactor is Mg(2+). In terms of tissue distribution, expressed in young leaves and flowers.

It catalyses the reaction 7-methylxanthine + S-adenosyl-L-methionine = theobromine + S-adenosyl-L-homocysteine + H(+). The enzyme catalyses theobromine + S-adenosyl-L-methionine = caffeine + S-adenosyl-L-homocysteine + H(+). It carries out the reaction 1,7-dimethylxanthine + S-adenosyl-L-methionine = caffeine + S-adenosyl-L-homocysteine + H(+). Its pathway is alkaloid biosynthesis. Involved in the biosynthesis of caffeine. Catalyzes the conversion of 7-methylxanthine (7mX) to theobromine and of theobromine to caffeine. Has 3-N- and 1-N-methylation activity. This Camellia sinensis (Tea plant) protein is 3,7-dimethylxanthine N-methyltransferase TCS1.